The sequence spans 335 residues: Holliday junction branch migration complex subunit RuvB (335 aa).

The segment at 1–181 (MERIVEVEKF…FGMHFRLQFY (181 aa)) is large ATPase domain (RuvB-L). Residues Leu20, Arg21, Gly62, Lys65, Thr66, Thr67, 128–130 (EDF), Arg171, Tyr181, and Arg218 contribute to the ATP site. Thr66 is a binding site for Mg(2+). The tract at residues 182–252 (TPQELAQIIT…RTQKALEALG (71 aa)) is small ATPAse domain (RuvB-S). The interval 255 to 335 (ERGFDELDLK…LTPNIQNSLF (81 aa)) is head domain (RuvB-H). Residues Arg309 and Arg314 each coordinate DNA.

This sequence belongs to the RuvB family. Homohexamer. Forms an RuvA(8)-RuvB(12)-Holliday junction (HJ) complex. HJ DNA is sandwiched between 2 RuvA tetramers; dsDNA enters through RuvA and exits via RuvB. An RuvB hexamer assembles on each DNA strand where it exits the tetramer. Each RuvB hexamer is contacted by two RuvA subunits (via domain III) on 2 adjacent RuvB subunits; this complex drives branch migration. In the full resolvosome a probable DNA-RuvA(4)-RuvB(12)-RuvC(2) complex forms which resolves the HJ.

The protein localises to the cytoplasm. The catalysed reaction is ATP + H2O = ADP + phosphate + H(+). Functionally, the RuvA-RuvB-RuvC complex processes Holliday junction (HJ) DNA during genetic recombination and DNA repair, while the RuvA-RuvB complex plays an important role in the rescue of blocked DNA replication forks via replication fork reversal (RFR). RuvA specifically binds to HJ cruciform DNA, conferring on it an open structure. The RuvB hexamer acts as an ATP-dependent pump, pulling dsDNA into and through the RuvAB complex. RuvB forms 2 homohexamers on either side of HJ DNA bound by 1 or 2 RuvA tetramers; 4 subunits per hexamer contact DNA at a time. Coordinated motions by a converter formed by DNA-disengaged RuvB subunits stimulates ATP hydrolysis and nucleotide exchange. Immobilization of the converter enables RuvB to convert the ATP-contained energy into a lever motion, pulling 2 nucleotides of DNA out of the RuvA tetramer per ATP hydrolyzed, thus driving DNA branch migration. The RuvB motors rotate together with the DNA substrate, which together with the progressing nucleotide cycle form the mechanistic basis for DNA recombination by continuous HJ branch migration. Branch migration allows RuvC to scan DNA until it finds its consensus sequence, where it cleaves and resolves cruciform DNA. In Nitratiruptor sp. (strain SB155-2), this protein is Holliday junction branch migration complex subunit RuvB.